Consider the following 262-residue polypeptide: Acyl-[acyl-carrier-protein]--UDP-N-acetylglucosamine O-acyltransferase (262 aa).

It belongs to the transferase hexapeptide repeat family. LpxA subfamily. Homotrimer.

It localises to the cytoplasm. It catalyses the reaction a (3R)-hydroxyacyl-[ACP] + UDP-N-acetyl-alpha-D-glucosamine = a UDP-3-O-[(3R)-3-hydroxyacyl]-N-acetyl-alpha-D-glucosamine + holo-[ACP]. It functions in the pathway glycolipid biosynthesis; lipid IV(A) biosynthesis; lipid IV(A) from (3R)-3-hydroxytetradecanoyl-[acyl-carrier-protein] and UDP-N-acetyl-alpha-D-glucosamine: step 1/6. Functionally, involved in the biosynthesis of lipid A, a phosphorylated glycolipid that anchors the lipopolysaccharide to the outer membrane of the cell. The polypeptide is Acyl-[acyl-carrier-protein]--UDP-N-acetylglucosamine O-acyltransferase (Haemophilus influenzae (strain ATCC 51907 / DSM 11121 / KW20 / Rd)).